The sequence spans 311 residues: Probable manganese-dependent inorganic pyrophosphatase (311 aa).

The Mn(2+) site is built by His9, Asp13, Asp15, Asp77, His99, and Asp151.

Belongs to the PPase class C family. The cofactor is Mn(2+).

The protein localises to the cytoplasm. It carries out the reaction diphosphate + H2O = 2 phosphate + H(+). In Streptococcus agalactiae serotype Ia (strain ATCC 27591 / A909 / CDC SS700), this protein is Probable manganese-dependent inorganic pyrophosphatase.